The chain runs to 394 residues: Zinc finger and SCAN domain-containing protein 9 (394 aa).

A Glycyl lysine isopeptide (Lys-Gly) (interchain with G-Cter in SUMO2) cross-link involves residue K26. Positions 52–134 (RRHFRQLCYQ…ILLEDLEREL (83 aa)) constitute an SCAN box domain. Glycyl lysine isopeptide (Lys-Gly) (interchain with G-Cter in SUMO2) cross-links involve residues K215 and K238. 5 C2H2-type zinc fingers span residues 254–276 (HKCDECGKSFTQSSGLIRHQRIH), 282–304 (YECNECGKAFSRSSGLFNHRGIH), 310–332 (YHCKECGKVFSQSAGLIQHQRIH), 338–360 (YQCSQCSKSYSRRSFLIEHQRSH), and 366–388 (HQCIECGKSFNRHCNLIRHQKIH).

This sequence belongs to the krueppel C2H2-type zinc-finger protein family.

The protein localises to the nucleus. Its function is as follows. May be involved in transcriptional regulation. This is Zinc finger and SCAN domain-containing protein 9 (ZSCAN9) from Homo sapiens (Human).